A 337-amino-acid polypeptide reads, in one-letter code: MIETLDSPANDSDFLDYITALENCTDEQISFKMQYLPVIYSIIFLVGFPGNTVAISIYVFKMRPWKSSTIIMLNLALTDLLYLTSLPFLIHYYASGENWIFGDFMCKFIRFGFHFNLYSSILFLTCFSLFRYIVIIHPMSCFSIQKTRWAVVACAGVWVISLVAVMPMTFLITSTTRTNRSACLDLTSSDDLTTIKWYNLILTATTFCLPLLIVTLCYTTIISTLTHGPRTHSCFKQKARRLTILLLLVFYVCFLPFHILRVIRIESRLLSISCSIESHIHEAYIVSRPLAALNTFGNLLLYVVVSNNFQQAFCSAVRCKAIGDLEQAKKDSCSNNP.

At 1–37 (MIETLDSPANDSDFLDYITALENCTDEQISFKMQYLP) the chain is on the extracellular side. The N-linked (GlcNAc...) asparagine glycan is linked to asparagine 23. Residues 38 to 58 (VIYSIIFLVGFPGNTVAISIY) form a helical membrane-spanning segment. Topologically, residues 59–69 (VFKMRPWKSST) are cytoplasmic. The chain crosses the membrane as a helical span at residues 70–90 (IIMLNLALTDLLYLTSLPFLI). Topologically, residues 91–116 (HYYASGENWIFGDFMCKFIRFGFHFN) are extracellular. Cysteine 106 and cysteine 183 form a disulfide bridge. The chain crosses the membrane as a helical span at residues 117–137 (LYSSILFLTCFSLFRYIVIIH). Residues 138–151 (PMSCFSIQKTRWAV) are Cytoplasmic-facing. Residues 152–172 (VACAGVWVISLVAVMPMTFLI) form a helical membrane-spanning segment. Residues 173–200 (TSTTRTNRSACLDLTSSDDLTTIKWYNL) lie on the Extracellular side of the membrane. The chain crosses the membrane as a helical span at residues 201–221 (ILTATTFCLPLLIVTLCYTTI). The Cytoplasmic portion of the chain corresponds to 222–242 (ISTLTHGPRTHSCFKQKARRL). The chain crosses the membrane as a helical span at residues 243–263 (TILLLLVFYVCFLPFHILRVI). Residues 264–284 (RIESRLLSISCSIESHIHEAY) are Extracellular-facing. Residues 285-305 (IVSRPLAALNTFGNLLLYVVV) form a helical membrane-spanning segment. Topologically, residues 306–337 (SNNFQQAFCSAVRCKAIGDLEQAKKDSCSNNP) are cytoplasmic.

The protein belongs to the G-protein coupled receptor 1 family. As to expression, highly expressed in mast cells and is found predominantly in the tissues of the respiratory tract and kidneys.

Its subcellular location is the cell membrane. Functionally, g protein-coupled receptor for dicarboxylates and amino dicarboxylates. Receptor for itaconate, a metabolite produced by myeloid lineages. In the respiratory epithelium, couples the binding of itaconate to the activation of GNA11 and downstream intracellular Ca(2+) release, leading to mucocilliary clearance of airborne pathogens. Receptor for leukotriene E4 (LTE4) produced by mast cells upon allergic inflammation. Binds with high affinity to LTE4 and elicits mucin release from pulmonary epithelium in response to airborne fungi allergens. Regulates mucin-producing goblet cell homeostasis. Receptor for alpha-ketoglutarate produced by proximal tubule renal cells upon metabolic alkalosis. In an intrarenal paracrine signaling pathway, binds alpha-ketoglutarate and drives transepithelial salt reabsorption and bicarbonate secretion by SLC26A4/pendrin-positive intercalated cells. The sequence is that of 2-oxoglutarate receptor 1 (Oxgr1) from Rattus norvegicus (Rat).